The following is a 208-amino-acid chain: Uracil phosphoribosyltransferase (208 aa).

Residues R78, R103, and 130-138 (DPMLATGGS) each bind 5-phospho-alpha-D-ribose 1-diphosphate. Uracil is bound by residues I193 and 198–200 (GDA). D199 contributes to the 5-phospho-alpha-D-ribose 1-diphosphate binding site.

It belongs to the UPRTase family. Mg(2+) is required as a cofactor.

It carries out the reaction UMP + diphosphate = 5-phospho-alpha-D-ribose 1-diphosphate + uracil. It functions in the pathway pyrimidine metabolism; UMP biosynthesis via salvage pathway; UMP from uracil: step 1/1. Allosterically activated by GTP. In terms of biological role, catalyzes the conversion of uracil and 5-phospho-alpha-D-ribose 1-diphosphate (PRPP) to UMP and diphosphate. This chain is Uracil phosphoribosyltransferase, found in Shewanella sp. (strain ANA-3).